The chain runs to 206 residues: Guanylate kinase (206 aa).

One can recognise a Guanylate kinase-like domain in the interval 7–185 (GIVLVLCAPS…AYDELRAAYL (179 aa)). Position 14–21 (14–21 (APSGTGKT)) interacts with ATP.

This sequence belongs to the guanylate kinase family.

It is found in the cytoplasm. It catalyses the reaction GMP + ATP = GDP + ADP. In terms of biological role, essential for recycling GMP and indirectly, cGMP. This chain is Guanylate kinase, found in Oleidesulfovibrio alaskensis (strain ATCC BAA-1058 / DSM 17464 / G20) (Desulfovibrio alaskensis).